The following is a 329-amino-acid chain: Cytoplasmic phosphatidylinositol transfer protein 1 (329 aa).

The disordered stretch occupies residues S267–E329.

It belongs to the PtdIns transfer protein family. PI transfer class IIB subfamily.

The protein resides in the cytoplasm. The enzyme catalyses a 1,2-diacyl-sn-glycero-3-phospho-(1D-myo-inositol)(in) = a 1,2-diacyl-sn-glycero-3-phospho-(1D-myo-inositol)(out). It carries out the reaction a 1,2-diacyl-sn-glycero-3-phosphate(in) = a 1,2-diacyl-sn-glycero-3-phosphate(out). Functionally, catalyzes the transfer of phosphatidylinositol (PI) and phosphatidic acid (PA) between membranes. Binds PA derived from the phospholipase D signaling pathway and among the cellular PA species, preferably binds to the C16:0/16:1 and C16:1/18:1 PA species. This is Cytoplasmic phosphatidylinositol transfer protein 1 (pitpnc1) from Xenopus tropicalis (Western clawed frog).